The chain runs to 250 residues: Probable E3 ubiquitin-protein ligase RHY1A (250 aa).

Over residues 1 to 10 (MTSASELFST) the composition is skewed to polar residues. Residues 1 to 106 (MTSASELFST…ETQSSSFVNL (106 aa)) are disordered. Basic residues predominate over residues 29 to 47 (YRHHSHHHHRRHGVHHHNQ). Residues 48–58 (RHDSDGCDPLR) are compositionally biased toward basic and acidic residues. Positions 60–69 (PTPRLRRFFH) are enriched in basic residues. Over residues 71 to 80 (PIQERSRPIR) the composition is skewed to basic and acidic residues. The span at 91–102 (TDSTDTETQSSS) shows a compositional bias: low complexity. The RING-type; atypical zinc-finger motif lies at 203–244 (CSICLESFTKGDMLISLPCTHSFHSSCLNPWLRACGDCPCCR).

The enzyme catalyses S-ubiquitinyl-[E2 ubiquitin-conjugating enzyme]-L-cysteine + [acceptor protein]-L-lysine = [E2 ubiquitin-conjugating enzyme]-L-cysteine + N(6)-ubiquitinyl-[acceptor protein]-L-lysine.. The protein operates within protein modification; protein ubiquitination. Probable E3 ubiquitin-protein ligase that may possess E3 ubiquitin ligase activity in vitro. The chain is Probable E3 ubiquitin-protein ligase RHY1A from Arabidopsis thaliana (Mouse-ear cress).